Reading from the N-terminus, the 27-residue chain is uncharacterized protein (27 aa).

Its subcellular location is the plastid. The protein localises to the cyanelle. This is an uncharacterized protein from Cyanophora paradoxa.